A 113-amino-acid chain; its full sequence is UPF0482 protein YnfB (113 aa).

The first 28 residues, 1 to 28, serve as a signal peptide directing secretion; the sequence is MKITLSKRIGLLAFLLPCALALSTTVHA.

The protein belongs to the UPF0482 family.

This is UPF0482 protein YnfB from Escherichia coli O127:H6 (strain E2348/69 / EPEC).